A 97-amino-acid polypeptide reads, in one-letter code: Large ribosomal subunit protein uL23 (97 aa).

This sequence belongs to the universal ribosomal protein uL23 family. In terms of assembly, part of the 50S ribosomal subunit. Contacts protein L29, and trigger factor when it is bound to the ribosome.

One of the early assembly proteins it binds 23S rRNA. One of the proteins that surrounds the polypeptide exit tunnel on the outside of the ribosome. Forms the main docking site for trigger factor binding to the ribosome. This is Large ribosomal subunit protein uL23 from Chelativorans sp. (strain BNC1).